Reading from the N-terminus, the 34-residue chain is Leader peptide SpeFL (34 aa).

Residues 1 to 13 (MENNSRTMPHIRR) are sensor domain. The short motif at 10 to 16 (HIRRTTH) is the Ornithine recognition loop element. Position 13 (Arg-13) interacts with L-ornithine. The effector domain stretch occupies residues 14 to 34 (TTHIMKFAHRNSFDFHFFNAR).

It belongs to the speF operon leader peptide family. In terms of assembly, binds ornithine in stalled 70S ribosomes, blocking the upper two-thirds of the exit tunnel. Contacts 23S rRNA and ribosomal proteins L4 and L22.

A small protein (arrest peptide) encoded upstream of inducible ornithine carboxylase gene (speF) that controls expression of downstream genes (speF and patE) by nascent chain-translational arrest and transcriptional attenuation. In the presence of ornithine a toeprint due to ribosomal arrest can be seen on the speFL transcript. Only L-ornithine (not other tested amino acids) has this effect. It is thought that in the presence of ornithine, ribosomal stalling on speFL prevents binding of Rho transcription termination factor to a downstream rut site allowing transcription of the operon. In the absence of ornithine, ribosomes terminate translation and are recycled, exposing the rut site allowing Rho to bind and prematurely terminate transcription. The presence of a pair of rare Arg codons could slow down translation to prevent polysome accumulation and to expose the rut site to Rho. This chain is Leader peptide SpeFL, found in Escherichia coli (strain K12).